A 385-amino-acid chain; its full sequence is Polyketide synthase 4 (385 aa).

Cys157 is a catalytic residue.

The protein belongs to the thiolase-like superfamily. Chalcone/stilbene synthases family. In terms of tissue distribution, expressed in glandular trichomes.

The protein localises to the cytoplasm. Functionally, polyketide synthase responsible for the biosynthesis of secondary metabolites. The sequence is that of Polyketide synthase 4 (PKSG4) from Cannabis sativa (Hemp).